The chain runs to 348 residues: Protein DMR6-LIKE OXYGENASE 2 (348 aa).

One can recognise a Fe2OG dioxygenase domain in the interval 194–294 (KHGQHMAINY…RISIPTFYCP (101 aa)). The Fe cation site is built by H219, D221, and H275. Residue R285 participates in 2-oxoglutarate binding.

This sequence belongs to the iron/ascorbate-dependent oxidoreductase family. It depends on Fe(2+) as a cofactor.

The enzyme catalyses salicylate + NADH + O2 + H(+) = 2,3-dihydroxybenzoate + NAD(+) + H2O. Converts salicylic acid (SA) to 2,3-dihydroxybenzoic acid (2,3-DHBA). Negative regulator of defense against Hyaloperonospora arabidopsidis. In terms of biological role, (Microbial infection) Confers susceptibility to the downy mildew pathogen Hyaloperonospora arabidopsidis. In Arabidopsis thaliana (Mouse-ear cress), this protein is Protein DMR6-LIKE OXYGENASE 2.